The primary structure comprises 608 residues: Chaperone protein HtpG (608 aa).

The tract at residues 1–332 (MQFQTEVNQL…VEDLPLNVSR (332 aa)) is a; substrate-binding. The tract at residues 333–536 (EILQENQILK…KNKLDFAMQQ (204 aa)) is b. Residues 537 to 608 (LLKQMGQEQN…LTKIINKAFS (72 aa)) form a c region.

Belongs to the heat shock protein 90 family. In terms of assembly, homodimer.

It localises to the cytoplasm. Molecular chaperone. Has ATPase activity. The protein is Chaperone protein HtpG of Campylobacter jejuni subsp. doylei (strain ATCC BAA-1458 / RM4099 / 269.97).